The primary structure comprises 592 residues: Calnexin (592 aa).

The first 20 residues, 1–20 (MEGKWLLCMLLVLGTAIVEA), serve as a signal peptide directing secretion. Topologically, residues 21-481 (HDGHDDDVID…QMIEAAEERP (461 aa)) are lumenal. Ca(2+) contacts are provided by Ser-74 and Asp-117. At Lys-137 the chain carries N6-acetyllysine. A disulfide bond links Cys-160 and Cys-194. Residues Tyr-164, Lys-166, Tyr-185, and Asp-192 each contribute to the an alpha-D-glucoside site. The disordered stretch occupies residues 260–345 (GNLLNDMTPP…AEKPEDWDED (86 aa)). Positions 274–319 (REIEDPEDRKPEDWDERPKIPDPEAVKPDDWDEDAPAKIPDEEATK) are enriched in basic and acidic residues. Positions 276–409 (IEDPEDRKPE…RKIPNPDFFE (134 aa)) are p domain (Extended arm). Tandem repeats lie at residues 278–290 (DPED…WDER), 295–307 (DPEA…WDED), 314–326 (DEEA…WLDD), 333–345 (DPDA…WDED), and 348–358 (GEWEAPQIANP). 4 X approximate repeats stretches follow at residues 278 to 345 (DPED…WDED) and 348 to 405 (GEWE…IPNP). The segment covering 323–345 (WLDDEPEYVPDPDAEKPEDWDED) has biased composition (acidic residues). The segment at 326–359 (DEPEYVPDPDAEKPEDWDEDMDGEWEAPQIANPK) is interaction with PPIB. Cys-360 and Cys-366 are oxidised to a cystine. 3 consecutive repeat copies span residues 367-377 (GVWQRPMIDNP), 381-391 (GKWKPPMIDNP), and 395-405 (GIWKPRKIPNP). An alpha-D-glucoside is bound at residue Glu-425. Position 436 (Asp-436) interacts with Ca(2+). The chain crosses the membrane as a helical span at residues 482–502 (WLWVVYILTVALPVFLVILFC). Residues Cys-502 and Cys-503 are each lipidated (S-palmitoyl cysteine). The Cytoplasmic portion of the chain corresponds to 503–592 (CSGKKQTSAM…SPRNRKPRRE (90 aa)). The segment at 503–592 (CSGKKQTSAM…SPRNRKPRRE (90 aa)) is sufficient to mediate interaction with SGIP1. A disordered region spans residues 511–592 (AMEYKKTDAP…SPRNRKPRRE (82 aa)). Acidic residues predominate over residues 525-547 (KEEEEEKEEEKDKGDEEEEGEEK). Position 554 is a phosphoserine (Ser-554). A Phosphothreonine modification is found at Thr-562. Ser-564 is subject to Phosphoserine; by MAPK3. At Ser-583 the chain carries Phosphoserine.

This sequence belongs to the calreticulin family. Interacts with MAPK3/ERK1. Interacts with KCNH2. Associates with ribosomes. Interacts with SGIP1; involved in negative regulation of endocytosis. The palmitoylated form interacts with the ribosome-translocon complex component SSR1, promoting efficient folding of glycoproteins. Interacts with SERPINA2P/SERPINA2 and with the S and Z variants of SERPINA1. Interacts with PPIB. Interacts with ZNRF4. Interacts with SMIM22. Interacts with TMX2. Interacts with TMEM35A/NACHO and CHRNA7. Interacts with reticulophagy regulators RETREG2 and RETREG3. Interacts with DNM1L; may form part of a larger protein complex at the ER-mitochondrial interface during mitochondrial fission. Interacts with ADAM7. Phosphorylated at Ser-564 by MAPK3/ERK1. Phosphorylation by MAPK3/ERK1 increases its association with ribosomes. Post-translationally, palmitoylation by DHHC6 leads to the preferential localization to the perinuclear rough ER. It mediates the association of calnexin with the ribosome-translocon complex (RTC) which is required for efficient folding of glycosylated proteins. In terms of processing, ubiquitinated, leading to proteasomal degradation. Probably ubiquitinated by ZNRF4.

The protein resides in the endoplasmic reticulum membrane. The protein localises to the mitochondrion membrane. Its subcellular location is the melanosome membrane. Its function is as follows. Calcium-binding protein that interacts with newly synthesized monoglucosylated glycoproteins in the endoplasmic reticulum. It may act in assisting protein assembly and/or in the retention within the ER of unassembled protein subunits. It seems to play a major role in the quality control apparatus of the ER by the retention of incorrectly folded proteins. Associated with partial T-cell antigen receptor complexes that escape the ER of immature thymocytes, it may function as a signaling complex regulating thymocyte maturation. Additionally it may play a role in receptor-mediated endocytosis at the synapse. In Pongo abelii (Sumatran orangutan), this protein is Calnexin (CANX).